A 1002-amino-acid chain; its full sequence is UPF0182 protein alr1037 (1002 aa).

The next 9 helical transmembrane spans lie at 7 to 29, 49 to 71, 123 to 145, 178 to 200, 202 to 224, 258 to 280, 300 to 319, 339 to 361, and 382 to 404; these read FRLS…LGAE, RGVL…LALA, LRWL…VHYG, QVFS…LIYS, FFLR…YNWA, LLEL…TYLL, HLYG…YWLS, VVVQ…FYLL, and GAYL…YLIV.

The protein belongs to the UPF0182 family.

It localises to the cell membrane. This Nostoc sp. (strain PCC 7120 / SAG 25.82 / UTEX 2576) protein is UPF0182 protein alr1037.